The following is a 267-amino-acid chain: uncharacterized protein (267 aa).

A phosphoserine mark is found at serine 210 and serine 224.

As to expression, testis. Down-regulated in men with spermatocyte arrest.

Its function is as follows. Essential for normal spermatogenesis and male fertility. This is an uncharacterized protein from Homo sapiens (Human).